We begin with the raw amino-acid sequence, 361 residues long: Protein RecA (361 aa).

77 to 84 serves as a coordination point for ATP; that stretch reads GPESSGKT.

This sequence belongs to the RecA family.

The protein localises to the cytoplasm. Functionally, can catalyze the hydrolysis of ATP in the presence of single-stranded DNA, the ATP-dependent uptake of single-stranded DNA by duplex DNA, and the ATP-dependent hybridization of homologous single-stranded DNAs. It interacts with LexA causing its activation and leading to its autocatalytic cleavage. The sequence is that of Protein RecA from Brucella suis (strain ATCC 23445 / NCTC 10510).